The chain runs to 141 residues: UPF0310 protein SSA_0254 (141 aa).

It belongs to the UPF0310 family.

The protein is UPF0310 protein SSA_0254 of Streptococcus sanguinis (strain SK36).